Consider the following 495-residue polypeptide: uncharacterized protein (495 aa).

Residues 305-317 (DYNNNNNENYSGS) are compositionally biased toward low complexity. Residues 305–404 (DYNNNNNENY…LDEEDNRKNK (100 aa)) are disordered. The segment covering 335–347 (YDNDENNDDENND) has biased composition (acidic residues). Residues 348–363 (ENNNNNNNNNNNNNNN) are compositionally biased toward low complexity. Residues 386–398 (SDDDEADNELDEE) show a composition bias toward acidic residues.

This is an uncharacterized protein from Dictyostelium discoideum (Social amoeba).